We begin with the raw amino-acid sequence, 32 residues long: ilv operon leader peptide (32 aa).

This chain is ilv operon leader peptide (ilvL), found in Escherichia coli O157:H7.